The sequence spans 448 residues: Asparagine--tRNA ligase (448 aa).

Belongs to the class-II aminoacyl-tRNA synthetase family. As to quaternary structure, homodimer.

It is found in the cytoplasm. The enzyme catalyses tRNA(Asn) + L-asparagine + ATP = L-asparaginyl-tRNA(Asn) + AMP + diphosphate + H(+). The sequence is that of Asparagine--tRNA ligase from Streptococcus pyogenes serotype M2 (strain MGAS10270).